The primary structure comprises 183 residues: Acidic proline-rich protein HP43A (183 aa).

The signal sequence occupies residues 1–14 (MLVVLLTAALLAEH). Residues 22–183 (ISQLSEEEQQ…QGSEEQSTSL (162 aa)) form a disordered region. A compositionally biased stretch (acidic residues) spans 52 to 65 (SDEEGDDDGEEDGN). Repeat copies occupy residues 81–100 (RPPK…QQQN), 101–120 (RPPK…QQQN), 121–140 (RPPK…QQQN), 141–160 (RPPK…QQQN), and 161–180 (RPPK…EEQS). Residues 86–183 (GNQQGPPQQE…QGSEEQSTSL (98 aa)) are compositionally biased toward low complexity.

It localises to the secreted. The chain is Acidic proline-rich protein HP43A (H29) from Mesocricetus auratus (Golden hamster).